A 379-amino-acid chain; its full sequence is Leukocyte elastase inhibitor (379 aa).

M1 carries the post-translational modification N-acetylmethionine. 2 positions are modified to N6-acetyllysine: K137 and K177. Residues 351 to 379 (NFNADHPFIFFIRHNPSANILFLGRFSSP) form a CARD-binding motif (CBM) region.

It belongs to the serpin family. Ov-serpin subfamily. In terms of assembly, monomer. Interacts (via C-terminus) with CASP1; CASP4 (via CARD domain) and CASP5; these interactions regulate the activity of inflammatory caspases. Interacts with PRTN3. Interacts with GZMH. Interacts with TMSB4. The N-terminus is blocked.

It is found in the secreted. It localises to the cytoplasm. Its subcellular location is the cytolytic granule. The protein localises to the early endosome. Functionally, neutrophil serine protease inhibitor that plays an essential role in the regulation of the innate immune response, inflammation and cellular homeostasis. Acts primarily to protect the cell from proteases released in the cytoplasm during stress or infection. These proteases are important in killing microbes but when released from granules, these potent enzymes also destroy host proteins and contribute to mortality. Regulates the activity of the neutrophil proteases elastase, cathepsin G, proteinase-3, chymase, chymotrypsin, and kallikrein-3. Also acts as a potent intracellular inhibitor of GZMH by directly blocking its proteolytic activity. During inflammation, limits the activity of inflammatory caspases CASP1, CASP4 and CASP5 by suppressing their caspase-recruitment domain (CARD) oligomerization and enzymatic activation. When secreted, promotes the proliferation of beta-cells via its protease inhibitory function. This Equus caballus (Horse) protein is Leukocyte elastase inhibitor (SERPINB1).